The sequence spans 449 residues: UDP-N-acetylmuramate--L-alanine ligase (449 aa).

An ATP-binding site is contributed by 121-127 (GAHGKSS).

This sequence belongs to the MurCDEF family.

Its subcellular location is the cytoplasm. The enzyme catalyses UDP-N-acetyl-alpha-D-muramate + L-alanine + ATP = UDP-N-acetyl-alpha-D-muramoyl-L-alanine + ADP + phosphate + H(+). The protein operates within cell wall biogenesis; peptidoglycan biosynthesis. Its function is as follows. Cell wall formation. The protein is UDP-N-acetylmuramate--L-alanine ligase of Helicobacter pylori (strain P12).